A 211-amino-acid polypeptide reads, in one-letter code: Probable GTP-binding protein EngB (211 aa).

The 175-residue stretch at 30 to 204 (EGFEVAFAGR…YTVLADWMEL (175 aa)) folds into the EngB-type G domain. Residues 38-45 (GRSNAGKS), 64-68 (GRTQL), 82-85 (DLPG), 149-152 (TKAD), and 182-185 (LFSA) each bind GTP. 2 residues coordinate Mg(2+): S45 and T66.

It belongs to the TRAFAC class TrmE-Era-EngA-EngB-Septin-like GTPase superfamily. EngB GTPase family. The cofactor is Mg(2+).

Functionally, necessary for normal cell division and for the maintenance of normal septation. In Pseudomonas savastanoi pv. phaseolicola (strain 1448A / Race 6) (Pseudomonas syringae pv. phaseolicola (strain 1448A / Race 6)), this protein is Probable GTP-binding protein EngB.